A 472-amino-acid chain; its full sequence is Eukaryotic translation initiation factor 2 subunit 3 (472 aa).

Ala2 is subject to N-acetylalanine; partial. Residue Ser16 is modified to Phosphoserine. A tr-type G domain is found at Gln39–Arg248. Positions Gly48–Ser55 are G1. Ala51–Thr56 contacts GTP. A G2 region spans residues Asn76–Lys80. Residues Asp134–Gly137 form a G3 region. GTP-binding positions include Asn190–Asp193 and Ser225–Gln227. Positions Asn190–Asp193 are G4. A G5 region spans residues Ser225–Gln227. The segment at Gly457–Val469 is interacts with CDC123.

This sequence belongs to the TRAFAC class translation factor GTPase superfamily. Classic translation factor GTPase family. EIF2G subfamily. As to quaternary structure, eukaryotic translation initiation factor 2 eIF2 is a heterotrimeric complex composed of an alpha (EIF2S1), a beta (EIF2S2) and a gamma (EIF2S3) chain. eIF2 is member of the 43S pre-initiation complex (43S PIC). Interacts (via C-terminus) with CDC123; the interaction is direct. Expressed in testis, brain, liver and muscle.

It is found in the cytoplasm. Its subcellular location is the cytosol. The enzyme catalyses GTP + H2O = GDP + phosphate + H(+). Member of the eIF2 complex that functions in the early steps of protein synthesis by forming a ternary complex with GTP and initiator tRNA. This complex binds to a 40S ribosomal subunit, followed by mRNA binding to form the 43S pre-initiation complex (43S PIC). Junction of the 60S ribosomal subunit to form the 80S initiation complex is preceded by hydrolysis of the GTP bound to eIF2 and release of an eIF2-GDP binary complex. In order for eIF2 to recycle and catalyze another round of initiation, the GDP bound to eIF2 must exchange with GTP by way of a reaction catalyzed by eIF-2B. The chain is Eukaryotic translation initiation factor 2 subunit 3 (EIF2S3) from Homo sapiens (Human).